The following is a 120-amino-acid chain: MARIAGVDLPKKKRVEYALTCKNGIGLKSSREILEAVGISFDKRVHELSEDEVSSIAKKIQQSYLVEGDLRKKVQMDIKSLMDLGNYRGIRHRKGLPVRGQTTKNNARTRKGKKKTVGSK.

The disordered stretch occupies residues 92 to 120 (HRKGLPVRGQTTKNNARTRKGKKKTVGSK). The span at 107-120 (ARTRKGKKKTVGSK) shows a compositional bias: basic residues.

Belongs to the universal ribosomal protein uS13 family. As to quaternary structure, part of the 30S ribosomal subunit. Forms a loose heterodimer with protein S19. Forms two bridges to the 50S subunit in the 70S ribosome.

Located at the top of the head of the 30S subunit, it contacts several helices of the 16S rRNA. In the 70S ribosome it contacts the 23S rRNA (bridge B1a) and protein L5 of the 50S subunit (bridge B1b), connecting the 2 subunits; these bridges are implicated in subunit movement. Contacts the tRNAs in the A and P-sites. This chain is Small ribosomal subunit protein uS13, found in Helicobacter pylori (strain J99 / ATCC 700824) (Campylobacter pylori J99).